Consider the following 1070-residue polypeptide: DNA-directed RNA polymerase subunit beta (1070 aa).

It belongs to the RNA polymerase beta chain family. As to quaternary structure, in plastids the minimal PEP RNA polymerase catalytic core is composed of four subunits: alpha, beta, beta', and beta''. When a (nuclear-encoded) sigma factor is associated with the core the holoenzyme is formed, which can initiate transcription.

The protein localises to the plastid. It localises to the chloroplast. The catalysed reaction is RNA(n) + a ribonucleoside 5'-triphosphate = RNA(n+1) + diphosphate. Its function is as follows. DNA-dependent RNA polymerase catalyzes the transcription of DNA into RNA using the four ribonucleoside triphosphates as substrates. The sequence is that of DNA-directed RNA polymerase subunit beta from Populus alba (White poplar).